The chain runs to 447 residues: NAD-dependent histone deacetylase HST3 (447 aa).

Positions 1-21 are disordered; that stretch reads MTSVSPSPPASRSGSMCSDLP. Residues 35-363 form the Deacetylase sirtuin-type domain; it reads LDADDEVLRR…IKKLRQLKRE (329 aa). NAD(+)-binding positions include 60–79 and 151–154; these read GAGISCNAGIPDFRSSDGLY and QNID. Residue His187 is the Proton acceptor of the active site. The Zn(2+) site is built by Cys195, Cys198, Cys220, and Cys223. NAD(+)-binding positions include 282-284, 312-314, and Cys333; these read GTS and NKT. The segment covering 365–375 has biased composition (basic and acidic residues); it reads SDLRKQMKAQK. Disordered regions lie at residues 365–393 and 411–447; these read SDLRKQMKAQKDSIGTPPTTPLRTAQGID and KRKILSPENSSEEDEEENLDTRKRAKIRPTFGDNQAS.

This sequence belongs to the sirtuin family. Class I subfamily. The cofactor is Zn(2+).

It localises to the cytoplasm. It is found in the nucleus. The enzyme catalyses N(6)-acetyl-L-lysyl-[protein] + NAD(+) + H2O = 2''-O-acetyl-ADP-D-ribose + nicotinamide + L-lysyl-[protein]. In terms of biological role, NAD-dependent histone deacetylase, which contributes together with HST4 to histone H3 'Lys-56' deacetylation, regulation of telomeric silencing, proper cell cycle progression, DNA damage control, DNA recombination, and genomic maintenance. The sequence is that of NAD-dependent histone deacetylase HST3 (HST3) from Saccharomyces cerevisiae (strain ATCC 204508 / S288c) (Baker's yeast).